The sequence spans 256 residues: uncharacterized protein (256 aa).

The next 2 membrane-spanning stretches (helical) occupy residues Cys181 to Val201 and Gly231 to Ala251.

It localises to the cell membrane. This is an uncharacterized protein from Methanocaldococcus jannaschii (strain ATCC 43067 / DSM 2661 / JAL-1 / JCM 10045 / NBRC 100440) (Methanococcus jannaschii).